Reading from the N-terminus, the 126-residue chain is Small ribosomal subunit protein uS8 (126 aa).

It belongs to the universal ribosomal protein uS8 family. In terms of assembly, part of the 30S ribosomal subunit. Contacts proteins S5 and S12.

In terms of biological role, one of the primary rRNA binding proteins, it binds directly to 16S rRNA central domain where it helps coordinate assembly of the platform of the 30S subunit. This Oleidesulfovibrio alaskensis (strain ATCC BAA-1058 / DSM 17464 / G20) (Desulfovibrio alaskensis) protein is Small ribosomal subunit protein uS8.